Reading from the N-terminus, the 75-residue chain is Small ribosomal subunit protein bS18 (75 aa).

The protein belongs to the bacterial ribosomal protein bS18 family. As to quaternary structure, part of the 30S ribosomal subunit. Forms a tight heterodimer with protein bS6.

In terms of biological role, binds as a heterodimer with protein bS6 to the central domain of the 16S rRNA, where it helps stabilize the platform of the 30S subunit. This is Small ribosomal subunit protein bS18 from Buchnera aphidicola subsp. Schizaphis graminum (strain Sg).